A 591-amino-acid polypeptide reads, in one-letter code: Phenylalanine--tRNA ligase beta subunit (591 aa).

In terms of domain architecture, B5 spans 304 to 380 (LSYREMTVTT…VAFGYNNLIT (77 aa)). Asp-358, Asp-364, Glu-367, and Asp-368 together coordinate Mg(2+).

Belongs to the phenylalanyl-tRNA synthetase beta subunit family. Type 2 subfamily. In terms of assembly, tetramer of two alpha and two beta subunits. Mg(2+) serves as cofactor.

Its subcellular location is the cytoplasm. The catalysed reaction is tRNA(Phe) + L-phenylalanine + ATP = L-phenylalanyl-tRNA(Phe) + AMP + diphosphate + H(+). The protein is Phenylalanine--tRNA ligase beta subunit of Caenorhabditis elegans.